The primary structure comprises 235 residues: Carboxy-S-adenosyl-L-methionine synthase (235 aa).

S-adenosyl-L-methionine-binding positions include Tyr35, 60-62 (GCS), 83-84 (DN), Asn124, and Arg191.

This sequence belongs to the class I-like SAM-binding methyltransferase superfamily. Cx-SAM synthase family. As to quaternary structure, homodimer.

It carries out the reaction prephenate + S-adenosyl-L-methionine = carboxy-S-adenosyl-L-methionine + 3-phenylpyruvate + H2O. Functionally, catalyzes the conversion of S-adenosyl-L-methionine (SAM) to carboxy-S-adenosyl-L-methionine (Cx-SAM). The chain is Carboxy-S-adenosyl-L-methionine synthase from Campylobacter jejuni subsp. doylei (strain ATCC BAA-1458 / RM4099 / 269.97).